Consider the following 392-residue polypeptide: Acetyl-CoA acetyltransferase (392 aa).

The active-site Acyl-thioester intermediate is Cys85. CoA contacts are provided by Cys206, Ser207, Val209, and Lys332. His336 serves as the catalytic Proton acceptor.

This sequence belongs to the thiolase-like superfamily. Thiolase family. In terms of assembly, interacts with HMG-CoA synthase (HMGCS) that catalyzes the second step in the pathway and with a DUF35 protein. The acetoacetyl-CoA thiolase/HMG-CoA synthase complex channels the intermediate via a fused CoA-binding site, which allows for efficient coupling of the endergonic thiolase reaction with the exergonic HMGCS reaction.

The enzyme catalyses 2 acetyl-CoA = acetoacetyl-CoA + CoA. It functions in the pathway metabolic intermediate biosynthesis; (R)-mevalonate biosynthesis; (R)-mevalonate from acetyl-CoA: step 1/3. Its function is as follows. Catalyzes the condensation of two acetyl-coA molecules into acetoacetyl-CoA. Functions in the mevalonate (MVA) pathway leading to isopentenyl diphosphate (IPP), a key precursor for the biosynthesis of isoprenoid compounds that are building blocks of archaeal membrane lipids. This Methanothermococcus thermolithotrophicus (Methanococcus thermolithotrophicus) protein is Acetyl-CoA acetyltransferase.